Reading from the N-terminus, the 319-residue chain is ATP-dependent 6-phosphofructokinase (319 aa).

ATP-binding positions include glycine 10, 71-72 (RS), and 101-104 (GDGS). Aspartate 102 contacts Mg(2+). 125–127 (TID) contributes to the substrate binding site. Aspartate 127 (proton acceptor) is an active-site residue. Residue arginine 154 participates in ADP binding. Substrate contacts are provided by residues arginine 162 and 169-171 (MGR). 185–187 (GAE) provides a ligand contact to ADP. Residues glutamate 223, arginine 244, and 250–253 (HVQR) each bind substrate.

The protein belongs to the phosphofructokinase type A (PFKA) family. ATP-dependent PFK group I subfamily. Prokaryotic clade 'B1' sub-subfamily. Homotetramer. Mg(2+) is required as a cofactor.

The protein resides in the cytoplasm. The catalysed reaction is beta-D-fructose 6-phosphate + ATP = beta-D-fructose 1,6-bisphosphate + ADP + H(+). Its pathway is carbohydrate degradation; glycolysis; D-glyceraldehyde 3-phosphate and glycerone phosphate from D-glucose: step 3/4. With respect to regulation, allosterically activated by ADP and other diphosphonucleosides, and allosterically inhibited by phosphoenolpyruvate. Functionally, catalyzes the phosphorylation of D-fructose 6-phosphate to fructose 1,6-bisphosphate by ATP, the first committing step of glycolysis. The polypeptide is ATP-dependent 6-phosphofructokinase (Wolinella succinogenes (strain ATCC 29543 / DSM 1740 / CCUG 13145 / JCM 31913 / LMG 7466 / NCTC 11488 / FDC 602W) (Vibrio succinogenes)).